Consider the following 425-residue polypeptide: Glutamate-1-semialdehyde 2,1-aminomutase (425 aa).

Lysine 265 is subject to N6-(pyridoxal phosphate)lysine.

This sequence belongs to the class-III pyridoxal-phosphate-dependent aminotransferase family. HemL subfamily. Homodimer. It depends on pyridoxal 5'-phosphate as a cofactor.

It is found in the cytoplasm. The catalysed reaction is (S)-4-amino-5-oxopentanoate = 5-aminolevulinate. Its pathway is porphyrin-containing compound metabolism; protoporphyrin-IX biosynthesis; 5-aminolevulinate from L-glutamyl-tRNA(Glu): step 2/2. This Clostridium perfringens (strain 13 / Type A) protein is Glutamate-1-semialdehyde 2,1-aminomutase.